The sequence spans 172 residues: Large ribosomal subunit protein uL10 (172 aa).

Belongs to the universal ribosomal protein uL10 family. In terms of assembly, part of the ribosomal stalk of the 50S ribosomal subunit. The N-terminus interacts with L11 and the large rRNA to form the base of the stalk. The C-terminus forms an elongated spine to which L12 dimers bind in a sequential fashion forming a multimeric L10(L12)X complex.

Forms part of the ribosomal stalk, playing a central role in the interaction of the ribosome with GTP-bound translation factors. The sequence is that of Large ribosomal subunit protein uL10 from Rhodospirillum centenum (strain ATCC 51521 / SW).